Consider the following 519-residue polypeptide: Na(+)/H(+) exchange regulatory cofactor NHE-RF3 (519 aa).

PDZ domains are found at residues 9-90 (ECKL…LDGD), 134-215 (RLCY…VDKE), and 243-323 (IVEM…VDKE). 5 positions are modified to phosphoserine: serine 148, serine 192, serine 250, serine 334, and serine 348. The disordered stretch occupies residues 347 to 374 (GSVKEAPAPTPTSLEVSSPPDTTEEVDH). The segment covering 357–367 (PTSLEVSSPPD) has biased composition (polar residues). Positions 378–458 (LCRLAKGENG…NVTLLVCGKK (81 aa)) constitute a PDZ 4 domain. The residue at position 451 (threonine 451) is a Phosphothreonine. The tract at residues 473–519 (SLADPPDTPPDSKEGIVVESKHDSHMAKERAHSTASHSSSNSEDTEM) is disordered. A compositionally biased stretch (basic and acidic residues) spans 482 to 504 (PDSKEGIVVESKHDSHMAKERAH). Phosphoserine is present on residues serine 492, serine 508, serine 510, serine 511, serine 512, and serine 514. Positions 505–519 (STASHSSSNSEDTEM) are enriched in low complexity.

The protein belongs to the NHER family. Interacts with PDZK1IP1 and ABCC2. Binds to the C-terminal region of SLC26A3. Interacts (via PDZ domains 1 and 3) with SCARB1 (C-terminal domain). Forms a heterodimeric complex with NHERF1. Interacts with AKAP2, BCR, CFTR, SLCO1A1, SLC22A12, SLC22A4, SLC22A5, NHERF2 and SLC17A1. Component of a complex, composed of PDZK1, SYNGAP1, KLHL17 and NMDA receptors. Interacts (via PDZ1 domain) directly with KLHL17; the interaction is important for integrity of actin cytoskeleton structures in neurons. Interacts (via C-terminal PDZ domain) with SLC26A6 (via C-terminal domain). Interacts (via C-terminal PDZ domain) with SLC9A3 (via C-terminal domain). Interacts (via the first PDZ domain) with PTGIR (via non-isoprenylated C-terminus). Interacts (via PDZ domains 1 and 3) with SLC5A8 (via PDZ-binding motif); interaction increases nicotinate transport activity of SLC5A8.

It localises to the membrane. Its subcellular location is the cell membrane. In terms of biological role, a scaffold protein that connects plasma membrane proteins and regulatory components, regulating their surface expression in epithelial cells apical domains. May be involved in the coordination of a diverse range of regulatory processes for ion transport and second messenger cascades. In complex with NHERF1, may cluster proteins that are functionally dependent in a mutual fashion and modulate the trafficking and the activity of the associated membrane proteins. May play a role in the cellular mechanisms associated with multidrug resistance through its interaction with ABCC2 and PDZK1IP1. May potentiate the CFTR chloride channel activity. Required for normal cell-surface expression of SCARB1. Plays a role in maintaining normal plasma cholesterol levels via its effects on SCARB1. Plays a role in the normal localization and function of the chloride-anion exchanger SLC26A6 to the plasma membrane in the brush border of the proximal tubule of the kidney. May be involved in the regulation of proximal tubular Na(+)-dependent inorganic phosphate cotransport therefore playing an important role in tubule function. This is Na(+)/H(+) exchange regulatory cofactor NHE-RF3 (PDZK1) from Pongo abelii (Sumatran orangutan).